A 403-amino-acid polypeptide reads, in one-letter code: Aminomethyltransferase, mitochondrial (403 aa).

Residues 1–28 (MQRAMTVVPHLGLRLQALPLALGRPLSR) constitute a mitochondrion transit peptide. The substrate site is built by Glu-232, Arg-261, and Tyr-399.

Belongs to the GcvT family. As to quaternary structure, the glycine cleavage system is composed of four proteins: P, T, L and H.

Its subcellular location is the mitochondrion. The enzyme catalyses N(6)-[(R)-S(8)-aminomethyldihydrolipoyl]-L-lysyl-[protein] + (6S)-5,6,7,8-tetrahydrofolate = N(6)-[(R)-dihydrolipoyl]-L-lysyl-[protein] + (6R)-5,10-methylene-5,6,7,8-tetrahydrofolate + NH4(+). The glycine cleavage system catalyzes the degradation of glycine. In Canis lupus familiaris (Dog), this protein is Aminomethyltransferase, mitochondrial.